Here is a 62-residue protein sequence, read N- to C-terminus: Large ribosomal subunit protein bL28 (62 aa).

The protein belongs to the bacterial ribosomal protein bL28 family.

This Helicobacter pylori (strain HPAG1) protein is Large ribosomal subunit protein bL28.